The primary structure comprises 511 residues: Mediator of RNA polymerase II transcription subunit 17 (511 aa).

This sequence belongs to the Mediator complex subunit 17 family. Component of the Mediator complex.

It is found in the nucleus. Component of the Mediator complex, a coactivator involved in the regulated transcription of nearly all RNA polymerase II-dependent genes. Mediator functions as a bridge to convey information from gene-specific regulatory proteins to the basal RNA polymerase II transcription machinery. Mediator is recruited to promoters by direct interactions with regulatory proteins and serves as a scaffold for the assembly of a functional preinitiation complex with RNA polymerase II and the general transcription factors. In Yarrowia lipolytica (strain CLIB 122 / E 150) (Yeast), this protein is Mediator of RNA polymerase II transcription subunit 17 (SRB4).